Consider the following 345-residue polypeptide: Phenylalanine--tRNA ligase alpha subunit (345 aa).

Glu266 contributes to the Mg(2+) binding site.

Belongs to the class-II aminoacyl-tRNA synthetase family. Phe-tRNA synthetase alpha subunit type 1 subfamily. In terms of assembly, tetramer of two alpha and two beta subunits. It depends on Mg(2+) as a cofactor.

The protein localises to the cytoplasm. The enzyme catalyses tRNA(Phe) + L-phenylalanine + ATP = L-phenylalanyl-tRNA(Phe) + AMP + diphosphate + H(+). This is Phenylalanine--tRNA ligase alpha subunit from Burkholderia lata (strain ATCC 17760 / DSM 23089 / LMG 22485 / NCIMB 9086 / R18194 / 383).